Here is an 80-residue protein sequence, read N- to C-terminus: uncharacterized protein (80 aa).

Residues 12-32 form a helical membrane-spanning segment; it reads FKIIALILLIVLIINLSYKLF.

The protein resides in the membrane. This is an uncharacterized protein from Saccharomyces cerevisiae (strain ATCC 204508 / S288c) (Baker's yeast).